A 272-amino-acid chain; its full sequence is 4-hydroxy-tetrahydrodipicolinate reductase (272 aa).

NAD(+) is bound by residues 10-15 (GAGGRM), Glu36, 100-102 (GTT), and 124-127 (SGNM). Residue His157 is the Proton donor/acceptor of the active site. A (S)-2,3,4,5-tetrahydrodipicolinate-binding site is contributed by His158. Lys161 (proton donor) is an active-site residue. 167–168 (GT) is a (S)-2,3,4,5-tetrahydrodipicolinate binding site.

This sequence belongs to the DapB family.

It localises to the cytoplasm. It catalyses the reaction (S)-2,3,4,5-tetrahydrodipicolinate + NAD(+) + H2O = (2S,4S)-4-hydroxy-2,3,4,5-tetrahydrodipicolinate + NADH + H(+). The enzyme catalyses (S)-2,3,4,5-tetrahydrodipicolinate + NADP(+) + H2O = (2S,4S)-4-hydroxy-2,3,4,5-tetrahydrodipicolinate + NADPH + H(+). Its pathway is amino-acid biosynthesis; L-lysine biosynthesis via DAP pathway; (S)-tetrahydrodipicolinate from L-aspartate: step 4/4. Functionally, catalyzes the conversion of 4-hydroxy-tetrahydrodipicolinate (HTPA) to tetrahydrodipicolinate. The polypeptide is 4-hydroxy-tetrahydrodipicolinate reductase (Bradyrhizobium sp. (strain ORS 278)).